Reading from the N-terminus, the 121-residue chain is MPRVKRGVTARARHKKITDAATGYRGRRKNVFRIAKQAVMRAGQYAYRDRRNKKRVFRALWIARINAAVRQHDVTYSVFMNGMKKVAIELDRKVLSDMAIADKAAFAALVTRIKSVVNAAA.

The protein belongs to the bacterial ribosomal protein bL20 family.

Its function is as follows. Binds directly to 23S ribosomal RNA and is necessary for the in vitro assembly process of the 50S ribosomal subunit. It is not involved in the protein synthesizing functions of that subunit. The polypeptide is Large ribosomal subunit protein bL20 (Polynucleobacter necessarius subsp. necessarius (strain STIR1)).